The following is a 609-amino-acid chain: Probable ubiquitin-conjugating enzyme E2 25 (609 aa).

Disordered regions lie at residues 70–99 (EEDEYAVGSPGDDYGYPESSPLSNSLLDPE) and 151–185 (ADKESASSSKSSHANNGNNSSKKATKASGIHSQFS). The segment covering 156–178 (ASSSKSSHANNGNNSSKKATKAS) has biased composition (low complexity). The UBC core domain maps to 332 to 492 (DWAKRIQDEW…TFILSLKTMV (161 aa)). Cysteine 418 serves as the catalytic Glycyl thioester intermediate.

It belongs to the ubiquitin-conjugating enzyme family. Expressed in seeds, pistils, siliques, hypocotyls and leaves.

It carries out the reaction S-ubiquitinyl-[E1 ubiquitin-activating enzyme]-L-cysteine + [E2 ubiquitin-conjugating enzyme]-L-cysteine = [E1 ubiquitin-activating enzyme]-L-cysteine + S-ubiquitinyl-[E2 ubiquitin-conjugating enzyme]-L-cysteine.. It functions in the pathway protein modification; protein ubiquitination. Functionally, accepts the ubiquitin from the E1 complex and catalyzes its covalent attachment to other proteins. This Arabidopsis thaliana (Mouse-ear cress) protein is Probable ubiquitin-conjugating enzyme E2 25 (UBC25).